The sequence spans 306 residues: Elongation factor Ts (306 aa).

Positions 80–83 (TDFV) are involved in Mg(2+) ion dislocation from EF-Tu.

Belongs to the EF-Ts family.

It is found in the cytoplasm. In terms of biological role, associates with the EF-Tu.GDP complex and induces the exchange of GDP to GTP. It remains bound to the aminoacyl-tRNA.EF-Tu.GTP complex up to the GTP hydrolysis stage on the ribosome. In Methylorubrum extorquens (strain CM4 / NCIMB 13688) (Methylobacterium extorquens), this protein is Elongation factor Ts.